Reading from the N-terminus, the 706-residue chain is Probable E3 ubiquitin ligase complex SCF subunit sconB (706 aa).

Residues 1–12 are compositionally biased toward basic and acidic residues; sequence MQSDDRSVREGS. 2 disordered regions span residues 1–43 and 56–76; these read MQSD…LLQQ and TAEEIDTETDSNHRRPHSFGA. Positions 34-43 are enriched in low complexity; sequence QQQQQQLLQQ. The region spanning 203–249 is the F-box domain; that stretch reads IDFLTALPPEISFKILCYLDTTSLCKAAQVSSRWRALADDDVVWHRM. 7 WD repeats span residues 377 to 414, 417 to 456, 458 to 494, 496 to 537, 589 to 632, 635 to 672, and 675 to 706; these read GHTNGVMCLQFEDNILATGSYDATIKIWDTETGEELRT, GHQSGIRCLQFDDTKLISGSMDRSLKVWNWRTGECISTYT, HRGGVIGLHFDATILASASVDKTVKIWNFEDKSTFLL, GHTD…RTFH, ATET…CLRT, GHLEGVWALGADTLRIVSGAEDRMVKIWDPRTGKCERT, and GHSGPVTCIGLGDSRFATGSEDCEVRMYSFRN.

It belongs to the WD repeat MET30/SCONB/SCON-2 family. As to quaternary structure, component of the SCF(sconB) E3 ubiquitin ligase complex.

The protein operates within protein modification; protein ubiquitination. Functionally, component of the SCF(sconB) E3 ubiquitin ligase complex involved in the regulation of sulfur metabolite repression, probably by mediating the inactivation or degradation of the metR transcription factor. The sequence is that of Probable E3 ubiquitin ligase complex SCF subunit sconB (sconB) from Aspergillus flavus (strain ATCC 200026 / FGSC A1120 / IAM 13836 / NRRL 3357 / JCM 12722 / SRRC 167).